Consider the following 326-residue polypeptide: Serine hydrolase-like protein (326 aa).

The AB hydrolase-1 domain occupies 44–155; that stretch reads PVLCLHGWAD…FLPTEVTDMF (112 aa). The active site involves Ser118.

It belongs to the AB hydrolase superfamily.

Functionally, probable serine hydrolase. This Danio rerio (Zebrafish) protein is Serine hydrolase-like protein (serhl).